Reading from the N-terminus, the 277-residue chain is Phosphatidylglycerol--prolipoprotein diacylglyceryl transferase (277 aa).

Helical transmembrane passes span 21 to 41 (LAVR…LWLA), 60 to 80 (LLFA…VLFY), 95 to 115 (VWTG…AMLW), 124 to 144 (FFTI…AGRL), 176 to 196 (SQLY…NWFI), 203 to 223 (GTVS…VEYV), and 239 to 259 (MGQI…LWAF). A 1,2-diacyl-sn-glycero-3-phospho-(1'-sn-glycerol) is bound at residue Arg143.

Belongs to the Lgt family.

The protein resides in the cell inner membrane. It catalyses the reaction L-cysteinyl-[prolipoprotein] + a 1,2-diacyl-sn-glycero-3-phospho-(1'-sn-glycerol) = an S-1,2-diacyl-sn-glyceryl-L-cysteinyl-[prolipoprotein] + sn-glycerol 1-phosphate + H(+). It participates in protein modification; lipoprotein biosynthesis (diacylglyceryl transfer). In terms of biological role, catalyzes the transfer of the diacylglyceryl group from phosphatidylglycerol to the sulfhydryl group of the N-terminal cysteine of a prolipoprotein, the first step in the formation of mature lipoproteins. The chain is Phosphatidylglycerol--prolipoprotein diacylglyceryl transferase from Aliivibrio fischeri (strain ATCC 700601 / ES114) (Vibrio fischeri).